We begin with the raw amino-acid sequence, 112 residues long: Outer membrane protein assembly factor BamE (112 aa).

Positions methionine 1–glycine 19 are cleaved as a signal peptide. Residue cysteine 20 is the site of N-palmitoyl cysteine attachment. Residue cysteine 20 is the site of S-diacylglycerol cysteine attachment.

This sequence belongs to the BamE family. In terms of assembly, part of the Bam complex, which is composed of the outer membrane protein BamA, and four lipoproteins BamB, BamC, BamD and BamE.

Its subcellular location is the cell outer membrane. Its function is as follows. Part of the outer membrane protein assembly complex, which is involved in assembly and insertion of beta-barrel proteins into the outer membrane. The protein is Outer membrane protein assembly factor BamE of Salmonella typhimurium (strain LT2 / SGSC1412 / ATCC 700720).